We begin with the raw amino-acid sequence, 102 residues long: Small ribosomal subunit protein uS10 (102 aa).

It belongs to the universal ribosomal protein uS10 family. In terms of assembly, part of the 30S ribosomal subunit.

Involved in the binding of tRNA to the ribosomes. In Streptococcus pyogenes serotype M12 (strain MGAS2096), this protein is Small ribosomal subunit protein uS10.